The primary structure comprises 254 residues: Probable pectate lyase E (254 aa).

A signal peptide spans 1 to 17 (MYQPLLLLPLLLTSAFA). N-linked (GlcNAc...) asparagine glycosylation occurs at asparagine 175. The tract at residues 227–254 (TDNNDKEPKKKGSGPSNACKYKEPLSKC) is disordered.

This sequence belongs to the polysaccharide lyase 3 family. Ca(2+) serves as cofactor.

It is found in the secreted. It catalyses the reaction Eliminative cleavage of (1-&gt;4)-alpha-D-galacturonan to give oligosaccharides with 4-deoxy-alpha-D-galact-4-enuronosyl groups at their non-reducing ends.. In terms of biological role, pectinolytic enzyme consist of four classes of enzymes: pectin lyase, polygalacturonase, pectin methylesterase and rhamnogalacturonase. Among pectinolytic enzymes, pectin lyase is the most important in depolymerization of pectin, since it cleaves internal glycosidic bonds of highly methylated pectins. Favors pectate, the anion, over pectin, the methyl ester. The sequence is that of Probable pectate lyase E (plyE) from Neosartorya fischeri (strain ATCC 1020 / DSM 3700 / CBS 544.65 / FGSC A1164 / JCM 1740 / NRRL 181 / WB 181) (Aspergillus fischerianus).